The sequence spans 339 residues: MDHEADAFRDLMTITRFVLNEQSKYPESRGDFTILLSNIVLGCKFVCSAVNKAGLAKLIGLAGDTNIQGEEQKKLDVLSNDVFVKALVSSGRTSVLVSEEDEEATFVESSKCGKYCVVFDPLDGSSNIDCGVSIGTIFGIYTMEHSDEPTTKDVLKPGNEMVAAGYCMYGSSCMLVLSTGTGVHGFTLDPSLGEFILTHPDIKIPKKGNIYSVNEGNAQNWDGPTTKYVERCKYPKDGSPAKSLRYVGSMVADVHRTLLYGGIFLYPADKKSPNGKLRVLYEVFPMAFLMEQAGGQAFTGKKRALDLVPKKIHERSPIFLGSYDDVEEIKALYAEEEKN.

Glutamate 70, glutamate 99, aspartate 120, leucine 122, and aspartate 123 together coordinate Mg(2+). Residues 123–126, asparagine 214, tyrosine 246, tyrosine 266, and lysine 276 contribute to the substrate site; that span reads DGSS. Residue glutamate 282 coordinates Mg(2+).

Belongs to the FBPase class 1 family. It depends on Mg(2+) as a cofactor.

Its subcellular location is the cytoplasm. It catalyses the reaction beta-D-fructose 1,6-bisphosphate + H2O = beta-D-fructose 6-phosphate + phosphate. In Brassica napus (Rape), this protein is Fructose-1,6-bisphosphatase, cytosolic.